Here is a 289-residue protein sequence, read N- to C-terminus: uncharacterized protein (289 aa).

Glutamate 48 is an active-site residue.

Belongs to the PhzF family.

This is an uncharacterized protein from Pasteurella multocida (strain Pm70).